The sequence spans 333 residues: Flagellar P-ring protein (333 aa).

A signal peptide spans 1–22; sequence MRRNILSMFLFITLIIYSSIFA.

It belongs to the FlgI family. As to quaternary structure, the basal body constitutes a major portion of the flagellar organelle and consists of four rings (L,P,S, and M) mounted on a central rod.

Its subcellular location is the periplasm. The protein localises to the bacterial flagellum basal body. In terms of biological role, assembles around the rod to form the L-ring and probably protects the motor/basal body from shearing forces during rotation. This is Flagellar P-ring protein from Fervidobacterium nodosum (strain ATCC 35602 / DSM 5306 / Rt17-B1).